A 121-amino-acid polypeptide reads, in one-letter code: Small ribosomal subunit protein uS13 (121 aa).

Positions 90 to 121 (RHRRGLPTRGQNTKNNARTRKGPTKTVAGKKK) are disordered. The span at 106 to 121 (ARTRKGPTKTVAGKKK) shows a compositional bias: basic residues.

Belongs to the universal ribosomal protein uS13 family. Part of the 30S ribosomal subunit. Forms a loose heterodimer with protein S19. Forms two bridges to the 50S subunit in the 70S ribosome.

In terms of biological role, located at the top of the head of the 30S subunit, it contacts several helices of the 16S rRNA. In the 70S ribosome it contacts the 23S rRNA (bridge B1a) and protein L5 of the 50S subunit (bridge B1b), connecting the 2 subunits; these bridges are implicated in subunit movement. Contacts the tRNAs in the A and P-sites. The sequence is that of Small ribosomal subunit protein uS13 from Enterococcus faecalis (strain ATCC 700802 / V583).